The chain runs to 143 residues: AP-4 complex subunit sigma (143 aa).

This sequence belongs to the adaptor complexes small subunit family. As to quaternary structure, adaptor protein complex 4 (AP-4) is a heterotetramer composed of two large adaptins (epsilon-type subunit and beta-type subunit), a medium adaptin (mu-type subunit) and a small adaptin (sigma-type subunit). Interacts with EHD2.

The protein localises to the golgi apparatus. Its subcellular location is the trans-Golgi network. It is found in the membrane. The protein resides in the coated pit. Subunit of novel type of clathrin- or non-clathrin-associated protein coat involved in targeting proteins from the trans-Golgi network (TGN) to the endosomal-lysosomal system. In Arabidopsis thaliana (Mouse-ear cress), this protein is AP-4 complex subunit sigma.